We begin with the raw amino-acid sequence, 464 residues long: Argininosuccinate lyase 2 (464 aa).

Belongs to the lyase 1 family. Argininosuccinate lyase subfamily.

It localises to the cytoplasm. The enzyme catalyses 2-(N(omega)-L-arginino)succinate = fumarate + L-arginine. The protein operates within amino-acid biosynthesis; L-arginine biosynthesis; L-arginine from L-ornithine and carbamoyl phosphate: step 3/3. The protein is Argininosuccinate lyase 2 of Pseudomonas fluorescens (strain Pf0-1).